Consider the following 137-residue polypeptide: Proofreading thioesterase EntH (137 aa).

Residue glutamate 63 is the Nucleophile or proton acceptor of the active site.

This sequence belongs to the thioesterase PaaI family. Homotetramer. Dimer of dimers. Interacts specifically with the aryl carrier protein (ArCP) domain of EntB.

It localises to the cytoplasm. Its pathway is siderophore biosynthesis; enterobactin biosynthesis. Required for optimal enterobactin synthesis. Acts as a proofreading enzyme that prevents EntB misacylation by hydrolyzing the thioester bound existing between EntB and wrongly charged molecules. The polypeptide is Proofreading thioesterase EntH (Salmonella typhimurium (strain LT2 / SGSC1412 / ATCC 700720)).